The sequence spans 481 residues: Thyroid receptor-interacting protein 6 (481 aa).

Residues 1–12 (MSGPTWLPPKQP) show a composition bias toward pro residues. The disordered stretch occupies residues 1–259 (MSGPTWLPPK…QVPLSQPPEE (259 aa)). At Arg25 the chain carries Asymmetric dimethylarginine; alternate. The residue at position 25 (Arg25) is an Omega-N-methylarginine; alternate. The residue at position 55 (Tyr55) is a Phosphotyrosine; by SRC. Ser92 bears the Phosphoserine mark. Residues 108–122 (DGGRGHAPRRPDRQA) show a composition bias toward basic and acidic residues. Residue Arg111 is modified to Omega-N-methylarginine. Low complexity-rich tracts occupy residues 153–173 (SPYGAPTPASYATASTPAGPA) and 183–193 (PVRGCGPPRRG). An omega-N-methylarginine mark is found at Arg185 and Arg192. Ser195 is modified (phosphoserine). Arg211 carries the post-translational modification Omega-N-methylarginine. The segment covering 221–233 (SHREPGPGVKEEA) has biased composition (basic and acidic residues). At Arg243 the chain carries Omega-N-methylarginine. Position 254 is a phosphoserine (Ser254). LIM zinc-binding domains lie at 284–321 (CGGCGEDVVGDGAGVVALDRVFHVGCFVCSTCRAQLRG), 344–403 (CSTC…FAPR), and 404–472 (CSVC…RIQE). The interaction with MAGI1 and PTPN13 stretch occupies residues 474 to 481 (SATVTTDC).

This sequence belongs to the zyxin/ajuba family. As to quaternary structure, specifically interacts with the ligand binding domain of the thyroid receptor (TR) in the presence of thyroid hormone. Interacts (via the third LIM domain and C-terminus) with PTPN13 (via the second PDZ domain). Interacts (via the second LIM domain or via the third LIM domain plus C-terminus) with PDLIM4 (via PDZ domain). Found in a complex with PTPN13 and PDLIM4. Interacts with SVIL isoform 2. Interacts with LPAR2 but not other LPA receptors. Interacts with PRKAA2. Interacts with MAGI1. Interacts with SCRIB. Phosphorylation at Tyr-55 by SRC is required for enhancement of lysophosphatidic acid-induced cell migration. Tyr-55 is dephosphorylated by PTPN13.

It is found in the cytoplasm. It localises to the cytoskeleton. The protein resides in the cell junction. The protein localises to the focal adhesion. Its subcellular location is the nucleus. Relays signals from the cell surface to the nucleus to weaken adherens junction and promote actin cytoskeleton reorganization and cell invasiveness. Involved in lysophosphatidic acid-induced cell adhesion and migration. Acts as a transcriptional coactivator for NF-kappa-B and JUN, and mediates the transrepression of these transcription factors induced by glucocorticoid receptor. This is Thyroid receptor-interacting protein 6 (TRIP6) from Bos taurus (Bovine).